The chain runs to 126 residues: Glycine cleavage system H protein (126 aa).

In terms of domain architecture, Lipoyl-binding spans 21-103 (TVTIGISEHA…YEGGWIVKVK (83 aa)). At K62 the chain carries N6-lipoyllysine.

The protein belongs to the GcvH family. The glycine cleavage system is composed of four proteins: P, T, L and H. (R)-lipoate is required as a cofactor.

Its function is as follows. The glycine cleavage system catalyzes the degradation of glycine. The H protein shuttles the methylamine group of glycine from the P protein to the T protein. The protein is Glycine cleavage system H protein of Vibrio atlanticus (strain LGP32) (Vibrio splendidus (strain Mel32)).